A 259-amino-acid polypeptide reads, in one-letter code: Indole-diterpene biosynthesis cluster protein S (259 aa).

5 helical membrane passes run 5–25, 64–84, 87–107, 134–154, and 221–241; these read EASGWGFSLLQILLVLAGMVW, WFALHLFLYTTQLVGLSAIIL, VYLIRMLGLSTALPLISLWVL, VLWFTGLAHVASFLVATAASF, and LGAGLLARLFFVSLIAGPAAG.

The protein belongs to the ltmS family.

It localises to the membrane. In terms of biological role, part of the gene cluster that mediates the biosynthesis of paspalitrems, indole-diterpene (IDT) mycotoxins that are potent tremorgens in mammals. The geranylgeranyl diphosphate (GGPP) synthase idtG is proposed to catalyze the first step in IDT biosynthesis via catalysis of a series of iterative condensations of isopentenyl diphosphate (IPP) with dimethylallyl diphosphate (DMAPP), geranyl diphosphate (GPP), and farnesyl diphosphate (FPP), to form GGPP. Condensation of indole-3-glycerol phosphate with GGPP by the prenyltransferase idtC then forms 3-geranylgeranylindole (3-GGI). Epoxidation of the two terminal alkenes of the geranylgeranyl moiety by the FAD-dependent monooxygenase idtM, and cyclization by the terpene cyclase idtB then leads to the production of paspaline. The cytochrome P450 monooxygenase idtP then catalyzes oxidative elimination of the pendant methyl group at C-12 of paspaline and generates the C-10 ketone to yield 13-desoxypaxilline. The cytochrome P450 monooxygenase idtQ may catalyze the C-13 oxidation of 13-desoxypaxilline to afford paxilline. Considering that both paspalicine and paxilline were detected in C.paspali, idtQ also catalyzes the formation of paspalinine from 13-desoxypaxilline via paspalicine as an intermediate. Finally, the alpha-prenyltransferase idtF prenylates paspalinine at the C-20 or the C-21 positions to yield paspalitrems A and C, respectively. The hydroxylation of paspalitrem A at C-32 by a still unknown oxidase affords paspalitrem B. In Claviceps paspali (Rye ergot fungus), this protein is Indole-diterpene biosynthesis cluster protein S.